The sequence spans 475 residues: Bifunctional protein HldE (475 aa).

The interval 1-318 (MKITLPEFGK…ANALYTEQET (318 aa)) is ribokinase. 195–198 (NMSE) provides a ligand contact to ATP. Aspartate 264 is a catalytic residue. The interval 344-475 (MTNGCFDILH…DIIKTIRERG (132 aa)) is cytidylyltransferase.

In the N-terminal section; belongs to the carbohydrate kinase PfkB family. The protein in the C-terminal section; belongs to the cytidylyltransferase family. In terms of assembly, homodimer.

It carries out the reaction D-glycero-beta-D-manno-heptose 7-phosphate + ATP = D-glycero-beta-D-manno-heptose 1,7-bisphosphate + ADP + H(+). The enzyme catalyses D-glycero-beta-D-manno-heptose 1-phosphate + ATP + H(+) = ADP-D-glycero-beta-D-manno-heptose + diphosphate. The protein operates within nucleotide-sugar biosynthesis; ADP-L-glycero-beta-D-manno-heptose biosynthesis; ADP-L-glycero-beta-D-manno-heptose from D-glycero-beta-D-manno-heptose 7-phosphate: step 1/4. It participates in nucleotide-sugar biosynthesis; ADP-L-glycero-beta-D-manno-heptose biosynthesis; ADP-L-glycero-beta-D-manno-heptose from D-glycero-beta-D-manno-heptose 7-phosphate: step 3/4. In terms of biological role, catalyzes the phosphorylation of D-glycero-D-manno-heptose 7-phosphate at the C-1 position to selectively form D-glycero-beta-D-manno-heptose-1,7-bisphosphate. Catalyzes the ADP transfer from ATP to D-glycero-beta-D-manno-heptose 1-phosphate, yielding ADP-D-glycero-beta-D-manno-heptose. In Aeromonas salmonicida (strain A449), this protein is Bifunctional protein HldE.